The primary structure comprises 159 residues: RNA pyrophosphohydrolase (159 aa).

The 144-residue stretch at 6–149 (GFRPNVGIIL…KREVYRRALK (144 aa)) folds into the Nudix hydrolase domain. A Nudix box motif is present at residues 38–59 (GGINPQETPEDALYRELNEEVG).

This sequence belongs to the Nudix hydrolase family. RppH subfamily. Requires a divalent metal cation as cofactor.

In terms of biological role, accelerates the degradation of transcripts by removing pyrophosphate from the 5'-end of triphosphorylated RNA, leading to a more labile monophosphorylated state that can stimulate subsequent ribonuclease cleavage. The sequence is that of RNA pyrophosphohydrolase from Pseudomonas savastanoi pv. phaseolicola (strain 1448A / Race 6) (Pseudomonas syringae pv. phaseolicola (strain 1448A / Race 6)).